The sequence spans 445 residues: MSNTVYIGAKEYFPGIGKIGFEGRESDNPLAFKVYDANKTIGDKTMAEHLRFAVAYWHSFCGNGADPFGPGTRAYPWDVGNSALARAEAKSDAAFEFFTKLGVPYYCFHDIDLSPDADDIGEYESNLKHMVGVAKQRQADTGIKLLWGTANLFSHPRYMNGASTNPDFNVVARAAVQVKAAIDATVELGGENYVFWGGREGYACLHNTQMKREQDNMARFLTLARDYGRSIGFTGNFLIEPKPMEPMKHQYDFDSATVIGFLRQHGLDQDFKLNIEANHATLSGHSFEHDLQVASDAGLLGSIDANRGNPQNGWDTDQFPTDLYDTVGAMLVVLRQGGLAPGGLNFDAKVRRESSDPQDLFLAHIGGMDAFARGLEVANALLTSSPLEQWRAERYASFDNGTGADFAAGKITLADLAAHAAGNAPKQISGRQEAYENLINQYLTR.

Residues His109 and Asp112 contribute to the active site. Positions 240, 276, 279, 304, 315, 317, and 347 each coordinate Mg(2+).

It belongs to the xylose isomerase family. As to quaternary structure, homotetramer. Mg(2+) is required as a cofactor.

Its subcellular location is the cytoplasm. The catalysed reaction is alpha-D-xylose = alpha-D-xylulofuranose. The polypeptide is Xylose isomerase (Xanthomonas oryzae pv. oryzae (strain MAFF 311018)).